A 90-amino-acid polypeptide reads, in one-letter code: Acylphosphatase (90 aa).

The 88-residue stretch at 3-90 (KKQFVVYGIV…HSFGLFSVEH (88 aa)) folds into the Acylphosphatase-like domain. Catalysis depends on residues arginine 18 and asparagine 36.

This sequence belongs to the acylphosphatase family.

The enzyme catalyses an acyl phosphate + H2O = a carboxylate + phosphate + H(+). This chain is Acylphosphatase (acyP), found in Mannheimia succiniciproducens (strain KCTC 0769BP / MBEL55E).